The following is a 209-amino-acid chain: Uracil phosphoribosyltransferase (209 aa).

Residues R79, R104, and 131–139 (DPMLATGGS) each bind 5-phospho-alpha-D-ribose 1-diphosphate. Uracil is bound by residues I194 and 199–201 (GDA). Residue D200 participates in 5-phospho-alpha-D-ribose 1-diphosphate binding.

The protein belongs to the UPRTase family. It depends on Mg(2+) as a cofactor.

It carries out the reaction UMP + diphosphate = 5-phospho-alpha-D-ribose 1-diphosphate + uracil. It participates in pyrimidine metabolism; UMP biosynthesis via salvage pathway; UMP from uracil: step 1/1. With respect to regulation, allosterically activated by GTP. In terms of biological role, catalyzes the conversion of uracil and 5-phospho-alpha-D-ribose 1-diphosphate (PRPP) to UMP and diphosphate. The sequence is that of Uracil phosphoribosyltransferase from Latilactobacillus sakei (Lactobacillus sakei).